The primary structure comprises 170 residues: Lipoprotein signal peptidase (170 aa).

The next 4 helical transmembrane spans lie at 11–31 (LSWLWLSLLVLVIDQASKFYF), 41–61 (IVVIPDLFSWTLAYNTGAAFS), 69–89 (WQRWLFALIAIAVSAVLVVWL), and 95–115 (NETWLAIALALVLGGALGNLY). Residues aspartate 125 and aspartate 144 contribute to the active site. A helical membrane pass occupies residues 136–156 (YFPAFNFADSAITVGAVMLAL).

Belongs to the peptidase A8 family.

Its subcellular location is the cell inner membrane. The catalysed reaction is Release of signal peptides from bacterial membrane prolipoproteins. Hydrolyzes -Xaa-Yaa-Zaa-|-(S,diacylglyceryl)Cys-, in which Xaa is hydrophobic (preferably Leu), and Yaa (Ala or Ser) and Zaa (Gly or Ala) have small, neutral side chains.. It participates in protein modification; lipoprotein biosynthesis (signal peptide cleavage). This protein specifically catalyzes the removal of signal peptides from prolipoproteins. The sequence is that of Lipoprotein signal peptidase from Pseudomonas fluorescens (strain Pf0-1).